A 205-amino-acid chain; its full sequence is Holliday junction branch migration complex subunit RuvA (205 aa).

Positions 1–64 (MIGKLKGLID…EDQIKLFGFR (64 aa)) are domain I. The domain II stretch occupies residues 65–143 (TDHEREWFRL…ALSNVDPAVV (79 aa)). A flexible linker region spans residues 144-154 (QLSGALDDNRA). The segment at 154-205 (APRPVTDAISALVNLGYGQPQAAAAIAAAARAAGDDAATAQLIKLGLKELSK) is domain III.

It belongs to the RuvA family. Homotetramer. Forms an RuvA(8)-RuvB(12)-Holliday junction (HJ) complex. HJ DNA is sandwiched between 2 RuvA tetramers; dsDNA enters through RuvA and exits via RuvB. An RuvB hexamer assembles on each DNA strand where it exits the tetramer. Each RuvB hexamer is contacted by two RuvA subunits (via domain III) on 2 adjacent RuvB subunits; this complex drives branch migration. In the full resolvosome a probable DNA-RuvA(4)-RuvB(12)-RuvC(2) complex forms which resolves the HJ.

It localises to the cytoplasm. The RuvA-RuvB-RuvC complex processes Holliday junction (HJ) DNA during genetic recombination and DNA repair, while the RuvA-RuvB complex plays an important role in the rescue of blocked DNA replication forks via replication fork reversal (RFR). RuvA specifically binds to HJ cruciform DNA, conferring on it an open structure. The RuvB hexamer acts as an ATP-dependent pump, pulling dsDNA into and through the RuvAB complex. HJ branch migration allows RuvC to scan DNA until it finds its consensus sequence, where it cleaves and resolves the cruciform DNA. This chain is Holliday junction branch migration complex subunit RuvA, found in Rhodopseudomonas palustris (strain BisB5).